The sequence spans 209 residues: Uracil phosphoribosyltransferase (209 aa).

Residues R79, R104, and 131–139 contribute to the 5-phospho-alpha-D-ribose 1-diphosphate site; that span reads DPMLATGGS. Residues I194 and 199-201 contribute to the uracil site; that span reads GDA. D200 contacts 5-phospho-alpha-D-ribose 1-diphosphate.

This sequence belongs to the UPRTase family. The cofactor is Mg(2+).

The catalysed reaction is UMP + diphosphate = 5-phospho-alpha-D-ribose 1-diphosphate + uracil. It participates in pyrimidine metabolism; UMP biosynthesis via salvage pathway; UMP from uracil: step 1/1. Its activity is regulated as follows. Allosterically activated by GTP. Functionally, catalyzes the conversion of uracil and 5-phospho-alpha-D-ribose 1-diphosphate (PRPP) to UMP and diphosphate. The chain is Uracil phosphoribosyltransferase from Lactobacillus delbrueckii subsp. bulgaricus (strain ATCC 11842 / DSM 20081 / BCRC 10696 / JCM 1002 / NBRC 13953 / NCIMB 11778 / NCTC 12712 / WDCM 00102 / Lb 14).